Here is a 3344-residue protein sequence, read N- to C-terminus: Genome polyprotein (3344 aa).

In terms of domain architecture, Peptidase S30 spans 408 to 547 (IVGNSKINYI…RSVYAKMDQY (140 aa)). Active-site for P1 proteinase activity residues include His-456, Asp-465, and Ser-499. Residues 598–601 (KITC) carry the Involved in interaction with stylet and aphid transmission motif. An Involved in virions binding and aphid transmission motif is present at residues 856–858 (PTK). The 123-residue stretch at 882–1004 (MYIAKKGYCY…DSEMKHYIVG (123 aa)) folds into the Peptidase C6 domain. Residues Cys-890 and His-963 each act as for helper component proteinase activity in the active site. Positions 1473–1625 (EIAHSPEREF…TQFPTKIVTE (153 aa)) constitute a Helicase ATP-binding domain. 1486 to 1493 (GAVGSGKS) is an ATP binding site. Positions 1575 to 1578 (DECH) match the DECH box motif. The Helicase C-terminal domain occupies 1644-1803 (DVTAFADNIL…GLPVMTHNVG (160 aa)). The Nuclear localization signal motif lies at 2134 to 2141 (KKGNKKGK). Tyr-2156 is modified (O-(5'-phospho-RNA)-tyrosine). The region spanning 2283–2499 (GKSLCQGMRN…LSWGALKVWE (217 aa)) is the Peptidase C4 domain. Active-site for nuclear inclusion protein A activity residues include His-2327, Asp-2362, and Cys-2431. A RdRp catalytic domain is found at 2761–2885 (WVYCDADGSQ…AIHPDHEHVL (125 aa)). Residues 3059 to 3093 (KNEAVDAGLNEKLKEKEKQKEKEKEKQKEKEKDGA) show a composition bias toward basic and acidic residues. A disordered region spans residues 3059–3116 (KNEAVDAGLNEKLKEKEKQKEKEKEKQKEKEKDGASDGNDVSTSTKTGERDRDVNVGT).

Belongs to the potyviridae genome polyprotein family. As to quaternary structure, interacts with host eIF4E protein (via cap-binding region); this interaction mediates the translation of the VPg-viral RNA conjugates. Part of a complex that comprises VPg, RNA, host EIF4E and EIF4G; this interaction mediates the translation of the VPg-viral RNA conjugates. In terms of processing, VPg is uridylylated by the polymerase and is covalently attached to the 5'-end of the genomic RNA. This uridylylated form acts as a nucleotide-peptide primer for the polymerase. Potyviral RNA is expressed as two polyproteins which undergo post-translational proteolytic processing. Genome polyprotein is processed by NIa-pro, P1 and HC-pro proteinases resulting in the production of at least ten individual proteins. P3N-PIPO polyprotein is cleaved by P1 and HC-pro proteinases resulting in the production of three individual proteins. The P1 proteinase and the HC-pro cleave only their respective C-termini autocatalytically. 6K1 is essential for proper proteolytic separation of P3 from CI.

The protein resides in the host cytoplasmic vesicle. It is found in the host nucleus. Its subcellular location is the virion. It catalyses the reaction RNA(n) + a ribonucleoside 5'-triphosphate = RNA(n+1) + diphosphate. The catalysed reaction is Hydrolyzes glutaminyl bonds, and activity is further restricted by preferences for the amino acids in P6 - P1' that vary with the species of potyvirus, e.g. Glu-Xaa-Xaa-Tyr-Xaa-Gln-|-(Ser or Gly) for the enzyme from tobacco etch virus. The natural substrate is the viral polyprotein, but other proteins and oligopeptides containing the appropriate consensus sequence are also cleaved.. It carries out the reaction Hydrolyzes a Gly-|-Gly bond at its own C-terminus, commonly in the sequence -Tyr-Xaa-Val-Gly-|-Gly, in the processing of the potyviral polyprotein.. In terms of biological role, required for aphid transmission and also has proteolytic activity. Only cleaves a Gly-Gly dipeptide at its own C-terminus. Interacts with virions and aphid stylets. Acts as a suppressor of RNA-mediated gene silencing, also known as post-transcriptional gene silencing (PTGS), a mechanism of plant viral defense that limits the accumulation of viral RNAs. May have RNA-binding activity. Functionally, has helicase activity. It may be involved in replication. Its function is as follows. Indispensable for virus replication. Mediates the cap-independent, EIF4E-dependent translation of viral genomic RNAs. Binds to the cap-binding site of host EIF4E and thus interferes with the host EIF4E-dependent mRNA export and translation. VPg-RNA directly binds EIF4E and is a template for transcription. Also forms trimeric complexes with EIF4E-EIF4G, which are templates for translation. In terms of biological role, has RNA-binding and proteolytic activities. Functionally, an RNA-dependent RNA polymerase that plays an essential role in the virus replication. Its function is as follows. Involved in aphid transmission, cell-to-cell and systemis movement, encapsidation of the viral RNA and in the regulation of viral RNA amplification. This Carica papaya (Papaya) protein is Genome polyprotein.